Consider the following 469-residue polypeptide: Glutamate--tRNA ligase (469 aa).

The 'HIGH' region signature appears at 9 to 19; that stretch reads PSPTGFLHVGG. Zn(2+) is bound by residues cysteine 98, cysteine 100, cysteine 125, and aspartate 127. A 'KMSKS' region motif is present at residues 236–240; the sequence is KLSKR. Lysine 239 contacts ATP.

The protein belongs to the class-I aminoacyl-tRNA synthetase family. Glutamate--tRNA ligase type 1 subfamily. In terms of assembly, monomer. It depends on Zn(2+) as a cofactor.

Its subcellular location is the cytoplasm. It carries out the reaction tRNA(Glu) + L-glutamate + ATP = L-glutamyl-tRNA(Glu) + AMP + diphosphate. Catalyzes the attachment of glutamate to tRNA(Glu) in a two-step reaction: glutamate is first activated by ATP to form Glu-AMP and then transferred to the acceptor end of tRNA(Glu). In Shewanella sp. (strain W3-18-1), this protein is Glutamate--tRNA ligase.